The primary structure comprises 169 residues: NADH-quinone oxidoreductase subunit B (169 aa).

Positions 42, 43, 107, and 136 each coordinate [4Fe-4S] cluster.

It belongs to the complex I 20 kDa subunit family. As to quaternary structure, NDH-1 is composed of 14 different subunits. Subunits NuoB, C, D, E, F, and G constitute the peripheral sector of the complex. The cofactor is [4Fe-4S] cluster.

The protein localises to the cell inner membrane. The catalysed reaction is a quinone + NADH + 5 H(+)(in) = a quinol + NAD(+) + 4 H(+)(out). In terms of biological role, NDH-1 shuttles electrons from NADH, via FMN and iron-sulfur (Fe-S) centers, to quinones in the respiratory chain. The immediate electron acceptor for the enzyme in this species is believed to be ubiquinone. Couples the redox reaction to proton translocation (for every two electrons transferred, four hydrogen ions are translocated across the cytoplasmic membrane), and thus conserves the redox energy in a proton gradient. This is NADH-quinone oxidoreductase subunit B from Sulfurimonas denitrificans (strain ATCC 33889 / DSM 1251) (Thiomicrospira denitrificans (strain ATCC 33889 / DSM 1251)).